A 222-amino-acid chain; its full sequence is MKFFIDTANLDEILAAAELGVLDGVTTNPSLIAKIVGDPSNFTYNDFKAHIARICEIVDGPVSAEVTCLTAEEMIAEGEDLAAIHENVVVKCPLTIDGLKAIQHFSLNGIRTNATLVFSPNQALLAAKAGADYVSPFVGRLDDISTDGMELVKQIVTIYNNYGYPTEVIVASVRHPQHVVTAAMMGADIATIPYSVIKQLANHPLTDAGLKKFMDDAAVMKK.

The active-site Schiff-base intermediate with substrate is Lys91.

Belongs to the transaldolase family. Type 3B subfamily.

It is found in the cytoplasm. It carries out the reaction D-sedoheptulose 7-phosphate + D-glyceraldehyde 3-phosphate = D-erythrose 4-phosphate + beta-D-fructose 6-phosphate. It functions in the pathway carbohydrate degradation; pentose phosphate pathway; D-glyceraldehyde 3-phosphate and beta-D-fructose 6-phosphate from D-ribose 5-phosphate and D-xylulose 5-phosphate (non-oxidative stage): step 2/3. Transaldolase is important for the balance of metabolites in the pentose-phosphate pathway. This is Probable transaldolase from Pelodictyon phaeoclathratiforme (strain DSM 5477 / BU-1).